Here is a 30-residue protein sequence, read N- to C-terminus: Vitri peptide A (30 aa).

Positions 1–30 form a cross-link, cyclopeptide (Gly-Asn); sequence GIPCGESCVWIPCITSAIGCSCKSKVCYRN. 3 disulfide bridges follow: Cys4–Cys20, Cys8–Cys22, and Cys13–Cys27.

Post-translationally, this is a cyclic peptide.

In terms of biological role, probably participates in a plant defense mechanism. Has strong cytotoxic activity against human lymphoma U-937 GTB and human myeloma RPMI-8226/s cell lines. The chain is Vitri peptide A from Viola arvensis (European field pansy).